The chain runs to 332 residues: Methionyl-tRNA formyltransferase (332 aa).

114 to 117 (SLLP) lines the (6S)-5,6,7,8-tetrahydrofolate pocket.

The protein belongs to the Fmt family.

The enzyme catalyses L-methionyl-tRNA(fMet) + (6R)-10-formyltetrahydrofolate = N-formyl-L-methionyl-tRNA(fMet) + (6S)-5,6,7,8-tetrahydrofolate + H(+). Attaches a formyl group to the free amino group of methionyl-tRNA(fMet). The formyl group appears to play a dual role in the initiator identity of N-formylmethionyl-tRNA by promoting its recognition by IF2 and preventing the misappropriation of this tRNA by the elongation apparatus. The protein is Methionyl-tRNA formyltransferase of Corynebacterium aurimucosum (strain ATCC 700975 / DSM 44827 / CIP 107346 / CN-1) (Corynebacterium nigricans).